The sequence spans 163 residues: CDP-archaeol synthase (163 aa).

Helical transmembrane passes span Leu-4–Ile-24, Leu-52–Ile-72, Ile-75–Ile-95, Ala-107–Asn-127, and Val-128–Phe-148.

Belongs to the CDP-archaeol synthase family. Mg(2+) is required as a cofactor.

Its subcellular location is the cell membrane. It carries out the reaction 2,3-bis-O-(geranylgeranyl)-sn-glycerol 1-phosphate + CTP + H(+) = CDP-2,3-bis-O-(geranylgeranyl)-sn-glycerol + diphosphate. Its pathway is membrane lipid metabolism; glycerophospholipid metabolism. Its function is as follows. Catalyzes the formation of CDP-2,3-bis-(O-geranylgeranyl)-sn-glycerol (CDP-archaeol) from 2,3-bis-(O-geranylgeranyl)-sn-glycerol 1-phosphate (DGGGP) and CTP. This reaction is the third ether-bond-formation step in the biosynthesis of archaeal membrane lipids. The polypeptide is CDP-archaeol synthase (Sulfolobus acidocaldarius (strain ATCC 33909 / DSM 639 / JCM 8929 / NBRC 15157 / NCIMB 11770)).